Here is a 360-residue protein sequence, read N- to C-terminus: Arginase, non-hepatic 3 (360 aa).

The Mn(2+) site is built by His-122, Asp-145, His-147, and Asp-149. Substrate contacts are provided by residues His-147–Asn-151, Ser-158–Asn-160, and Asp-204. The Mn(2+) site is built by Asp-253 and Asp-255. Residues Thr-267 and Glu-298 each contribute to the substrate site.

It belongs to the arginase family. In terms of assembly, homotrimer. It depends on Mn(2+) as a cofactor. Expressed at differing tadpole stages in tail, intestine, hindlimb and trunk region. Strongest in tadpole tail.

The catalysed reaction is L-arginine + H2O = urea + L-ornithine. Its pathway is nitrogen metabolism; urea cycle; L-ornithine and urea from L-arginine: step 1/1. In terms of biological role, as well as its role in the urea cycle, may be involved in tissue remodeling. This Xenopus laevis (African clawed frog) protein is Arginase, non-hepatic 3 (arg2-c).